Reading from the N-terminus, the 701-residue chain is Pentatricopeptide repeat-containing protein At5g50390, chloroplastic (701 aa).

Residues 1 to 47 (MEIPLSRYQSIRLDEIRDSSSNPKVLTFPRKFSLRGRRWKNPFGRLS) constitute a chloroplast transit peptide. PPR repeat units lie at residues 86 to 116 (SGVT…LEIR), 122 to 156 (GVST…GFEP), 157 to 187 (EQYM…IPER), 188 to 218 (NLYS…MWEE), 223 to 257 (ETHT…GVVD), 258 to 288 (NTFV…MPEK), 289 to 323 (TTVA…GVSI), 324 to 358 (DQFT…GFES), 359 to 389 (EIVA…LPRK), 390 to 424 (NIIS…NVAP), 425 to 460 (NHVT…GIKP), and 461 to 491 (RAMH…APLK). A type E motif region spans residues 496 to 571 (MWAALLNACR…MPACTWVEVG (76 aa)). Residues 572–606 (DQTHSFLSGDRFDSYNETVKRQIYQKVDELMEEIS) form a type E(+) motif; degenerate region. A type DYW motif region spans residues 607–701 (EYGYSEEEQH…EGKCSCGGYW (95 aa)).

This sequence belongs to the PPR family. PCMP-H subfamily.

It localises to the plastid. Its subcellular location is the chloroplast. The protein is Pentatricopeptide repeat-containing protein At5g50390, chloroplastic (PCMP-H58) of Arabidopsis thaliana (Mouse-ear cress).